The sequence spans 1856 residues: Protein TANC1 (1856 aa).

Met1 bears the N-acetylmethionine mark. Disordered regions lie at residues 1–45 (MLKA…LSTT), 58–130 (SMSL…SCSP), 203–222 (KSPCETISSPSSTLESKDSG), 262–296 (RADNCSPVAEEETTGSAESVLPKAEPSAGDGPVPY), and 437–489 (IASS…RPRE). The segment covering 8-21 (KSREGGKGSKKEAG) has biased composition (basic and acidic residues). Polar residues predominate over residues 29 to 45 (PALSSSGDSPVNSLSTT). Ser60, Ser63, Ser64, Ser204, Ser267, and Ser462 each carry phosphoserine. The span at 60-77 (SLPSSPLLPRQSLLTQSR) shows a compositional bias: low complexity. Positions 203–216 (KSPCETISSPSSTL) are enriched in polar residues. The span at 439 to 475 (SSSPSLSPKSSDPTQDLPGTPLLSPSSSTSALSVTRT) shows a compositional bias: low complexity. ANK repeat units lie at residues 893–925 (EGLSAALASLRNLYTPNVKVSRLLILGGANVNY), 931–960 (NNAPILCVQSHLGHEEVVTLLLEFGACLDG), 964–993 (NGMNALCYAAAAGHMKLVCLLIKKGARVDH), 997–1026 (KGQCALVHSALRGHSDILQYLLNCEWSAGP), 1037–1066 (ALQQALTAAASMGHSSVVQSLLGMAEEHEI), 1075–1104 (WGETALTAAAGRGKVEICELLLERGAAVSR), 1108–1137 (RGVPPLFCAARQGHWQVVRLLLDRGCDVNL), 1141–1170 (QGRTPLMVASCEGHLSTVEFLLSKGAALSS), 1174–1203 (EGLSALSWACLKGHRAVVQYLVEEGAEIDQ), 1207–1236 (NGRTPLDLAAFYGDAETVLYLVEKGAVIEH), and 1240–1269 (SGMRPLDRAIGCRNTAVVVTLLRKGAKLGN). 3 TPR repeats span residues 1286-1319 (LQKLVEEGNVMYKKGKMKEAAQRYQYALRKFPRE), 1333-1366 (VSLYLNLSRCRRKTNDFGLAEEFASKALELKPKS), and 1368-1400 (EAFYARARAKRNSRQFLAALADLQEAVKLCPNN). Low complexity predominate over residues 1417 to 1426 (LQRNQQQKQQ). Disordered stretches follow at residues 1417 to 1597 (LQRN…FGDR), 1636 to 1720 (DMAP…NTPF), and 1832 to 1856 (HVSTEAHRSHLTSAKPKRSFIESNV). Residues Ser1436 and Ser1463 each carry the phosphoserine modification. The span at 1454–1463 (EEAEEEDTSS) shows a compositional bias: acidic residues. Composition is skewed to polar residues over residues 1490–1505 (EGLQSKGRSASPQSRA) and 1524–1556 (PTKQAQIVKTNQHLGSGQSSMRNSSTKIQVSSQ). Residues 1656-1686 (SLSSSGSSGSPSSSIKMSSSTSSLTSSSSVS) show a composition bias toward low complexity. Ser1665, Ser1673, and Ser1674 each carry phosphoserine.

It belongs to the TANC family. Interacts probably directly with DLG1, DLG4, HOMER1. Interacts with DLGAP1, INA, CAMK2A, GRIN2B and GRIA1. Interacts with TNIK and MINK1. In terms of processing, phosphorylated; by MINK1 and TNIK upon stimulation by RAP2A.

The protein resides in the postsynaptic density. May be a scaffold component in the postsynaptic density. This Mus musculus (Mouse) protein is Protein TANC1 (Tanc1).